The following is a 1060-amino-acid chain: Carbamoyl phosphate synthase large chain (1060 aa).

A carboxyphosphate synthetic domain region spans residues 1-401 (MPKRQDIHKI…SLLKAVRSLE (401 aa)). ATP is bound by residues Arg-129, Arg-169, Gly-175, Gly-176, Arg-208, Ile-210, Glu-215, Gly-241, Val-242, His-243, Gln-284, and Glu-298. The ATP-grasp 1 domain maps to 133–327 (KNLMQKLHEP…IAKMAAKIAV (195 aa)). Positions 284, 298, and 300 each coordinate Mg(2+). Residues Gln-284, Glu-298, and Asn-300 each coordinate Mn(2+). Residues 402–546 (VGLIHPERPA…YSTYESSTES (145 aa)) form an oligomerization domain region. The carbamoyl phosphate synthetic domain stretch occupies residues 547 to 929 (VKSDKPSVLV…ALYKAFEAAG (383 aa)). Positions 671–861 (DQVIKSLKLP…LAQVATLAIL (191 aa)) constitute an ATP-grasp 2 domain. Residues Arg-707, His-746, Leu-748, Glu-752, Gly-777, Ile-778, His-779, Ser-780, Gln-820, and Glu-832 each coordinate ATP. Gln-820, Glu-832, and Asn-834 together coordinate Mg(2+). Gln-820, Glu-832, and Asn-834 together coordinate Mn(2+). The 131-residue stretch at 930–1060 (MHLPQFGRAL…QAFSISPIKS (131 aa)) folds into the MGS-like domain. The segment at 930 to 1060 (MHLPQFGRAL…QAFSISPIKS (131 aa)) is allosteric domain.

Belongs to the CarB family. Composed of two chains; the small (or glutamine) chain promotes the hydrolysis of glutamine to ammonia, which is used by the large (or ammonia) chain to synthesize carbamoyl phosphate. Tetramer of heterodimers (alpha,beta)4. Mg(2+) is required as a cofactor. Requires Mn(2+) as cofactor.

The catalysed reaction is hydrogencarbonate + L-glutamine + 2 ATP + H2O = carbamoyl phosphate + L-glutamate + 2 ADP + phosphate + 2 H(+). It carries out the reaction hydrogencarbonate + NH4(+) + 2 ATP = carbamoyl phosphate + 2 ADP + phosphate + 2 H(+). It functions in the pathway amino-acid biosynthesis; L-arginine biosynthesis; carbamoyl phosphate from bicarbonate: step 1/1. It participates in pyrimidine metabolism; UMP biosynthesis via de novo pathway; (S)-dihydroorotate from bicarbonate: step 1/3. Large subunit of the glutamine-dependent carbamoyl phosphate synthetase (CPSase). CPSase catalyzes the formation of carbamoyl phosphate from the ammonia moiety of glutamine, carbonate, and phosphate donated by ATP, constituting the first step of 2 biosynthetic pathways, one leading to arginine and/or urea and the other to pyrimidine nucleotides. The large subunit (synthetase) binds the substrates ammonia (free or transferred from glutamine from the small subunit), hydrogencarbonate and ATP and carries out an ATP-coupled ligase reaction, activating hydrogencarbonate by forming carboxy phosphate which reacts with ammonia to form carbamoyl phosphate. This chain is Carbamoyl phosphate synthase large chain, found in Lacticaseibacillus casei (strain BL23) (Lactobacillus casei).